The following is a 708-amino-acid chain: Wall-associated receptor kinase-like 14 (708 aa).

An N-terminal signal peptide occupies residues 1–42 (MLRSIFDFNQRSTKMVMISHKLDLILVFIIVIGGSIFRRVSA). N-linked (GlcNAc...) asparagine glycans are attached at residues asparagine 43, asparagine 88, asparagine 101, asparagine 131, asparagine 158, asparagine 167, and asparagine 184. Residues 43-285 (NFTVPCNGRC…WRHCRSNLIT (243 aa)) are Extracellular-facing. Residues 286 to 306 (IVGGTVGGAFLLAALAFFFFC) traverse the membrane as a helical segment. Topologically, residues 307–708 (KRRRSTPLRS…TNTLLGNIPR (402 aa)) are cytoplasmic. One can recognise a Protein kinase domain in the interval 348-629 (FSEKQKLGIG…LEQIRLSGWI (282 aa)). Residues 354 to 362 (LGIGAYGTV) and lysine 376 contribute to the ATP site. The active-site Proton acceptor is aspartate 472. Disordered regions lie at residues 636-659 (SPAG…SIGS) and 686-708 (VQDP…NIPR). Basic and acidic residues predominate over residues 643–652 (SSDRGSERSV). Residues 692-708 (SAQSSPSTNTLLGNIPR) are compositionally biased toward polar residues.

This sequence belongs to the protein kinase superfamily. Ser/Thr protein kinase family.

The protein resides in the membrane. It carries out the reaction L-seryl-[protein] + ATP = O-phospho-L-seryl-[protein] + ADP + H(+). The enzyme catalyses L-threonyl-[protein] + ATP = O-phospho-L-threonyl-[protein] + ADP + H(+). Serine/threonine-protein kinase that may function as a signaling receptor of extracellular matrix component. The protein is Wall-associated receptor kinase-like 14 (WAKL14) of Arabidopsis thaliana (Mouse-ear cress).